A 468-amino-acid polypeptide reads, in one-letter code: ATP synthase subunit beta (468 aa).

148-155 (GGAGVGKT) is an ATP binding site.

This sequence belongs to the ATPase alpha/beta chains family. F-type ATPases have 2 components, CF(1) - the catalytic core - and CF(0) - the membrane proton channel. CF(1) has five subunits: alpha(3), beta(3), gamma(1), delta(1), epsilon(1). CF(0) has three main subunits: a(1), b(2) and c(9-12). The alpha and beta chains form an alternating ring which encloses part of the gamma chain. CF(1) is attached to CF(0) by a central stalk formed by the gamma and epsilon chains, while a peripheral stalk is formed by the delta and b chains.

The protein resides in the cell inner membrane. The catalysed reaction is ATP + H2O + 4 H(+)(in) = ADP + phosphate + 5 H(+)(out). Produces ATP from ADP in the presence of a proton gradient across the membrane. The catalytic sites are hosted primarily by the beta subunits. The protein is ATP synthase subunit beta of Xanthomonas euvesicatoria pv. vesicatoria (strain 85-10) (Xanthomonas campestris pv. vesicatoria).